The primary structure comprises 150 residues: uncharacterized protein (150 aa).

This is an uncharacterized protein from Saccharomyces cerevisiae (strain ATCC 204508 / S288c) (Baker's yeast).